Here is a 227-residue protein sequence, read N- to C-terminus: MRFDVITLFPDFFTTPLNSGLLGRAFNKNIAKVNLVNPRNYTTDKYKKVDDESYGGGVGMVLKPEPIFAAVESLPTLSKREVILLTPQGKRMHQGLFRELATDYEQLILICGHYEGIDERVQYLVSREVSLGDFVLTGGEIPALALINGVVRLLPGTVGKAESLECESFESGLLDYPQYTRPANFRGWKVPEVLLSGHHAEIARWRYQQQLQRTKSRRPDLLKNDDN.

Residues glycine 112 and 131–136 (LGDFVL) each bind S-adenosyl-L-methionine.

Belongs to the RNA methyltransferase TrmD family. Homodimer.

It is found in the cytoplasm. It catalyses the reaction guanosine(37) in tRNA + S-adenosyl-L-methionine = N(1)-methylguanosine(37) in tRNA + S-adenosyl-L-homocysteine + H(+). Its function is as follows. Specifically methylates guanosine-37 in various tRNAs. In Trichodesmium erythraeum (strain IMS101), this protein is tRNA (guanine-N(1)-)-methyltransferase.